The primary structure comprises 3707 residues: MKGIRKGESRAKESKPWEPGKRRCAKCGRLDFILMKKMGIKSGFTFWNLVFLLTVSCVKGFIYTCGGTLKGLNGTIESPGFPYGYPNGANCTWVIIAEERNRIQIVFQSFALEEEYDYLSLYDGHPHPTNFRTRLTGFHLPPPVTSTKSVFSLRLTSDFAVSAHGFKVYYEELQSSSCGNPGVPPKGVLYGTRFDVGDKIRYSCVTGYILDGHPQLTCIANSVNTASWDFPVPICRAEDACGGTMRGSSGIISSPSFPNEYHNNADCTWTIVAEPGDTISLIFTDFQMEEKYDYLEIEGSEPPTIWLSGMNIPPPIISNKNWLRLHFVTDSNHRYRGFSAPYQGSSTLTHTTSTGELEEHNRTTTGAIAVASTPADVTVSSVTAVTIHRLSEEQRVQVTSLRNSGLDPNTSKDGLSPHPADTQSTRRRPRHAEQIERTKELAVVTHRVKKAIDFKSRGFKLFPGKDNSNKFSILNEGGIKTASNLCPDPGEPENGKRIGSDFSLGSTVQFSCDEDYVLQGAKSITCQRIAEVFAAWSDHRPVCKVKTCGSNLQGPSGTFTSPNFPFQYDSNAQCVWVITAVNTNKVIQINFEEFDLEIGYDTLTIGDGGEVGDPRTVLQVLTGSFVPDLIVSMSSQMWLHLQTDESVGSVGFKVNYKEIEKESCGDPGTPLYGIREGDGFSNRDVLRFECQFGFELIGEKSIVCQENNQWSANIPICIFPCLSNFTAPMGTVLSPDYPEGYGNNLNCIWTIISDPGSRIHLSFNDFDLESQFDFLAVKDGDSPESPILGTFTGAEVPSHLTSNSHILRLEFQADHSMSGRGFNITYNTFGHNECPDPGIPINARRFGDNFQLGSSISVICEEGFIKTQGTETITCILMDGKVMWSGLIPKCGAPCGGHFSAPSGVILSPGWPGYYKDSLNCEWVIEAEPGHSIKITFERFQTELNYDVLEVHDGPNLLSPLLGSYNGTQVPQFLFSSSNFIYLLFTTDNSRSNNGFKIHYESVTVNTYSCLDPGIPVHGRRYGHDFSIGSTVSFSCDSGYRLSHEEPLLCEKNHWWSHPLPTCDALCGGDVRGPSGTILSPGYPEFYPNSLNCTWTVDVTHGKGVQFNFHTFHLEDHHDYLLITENGSFTQPLARLTGSDLPPTINAGLYGNFRAQLRFISDFSISYEGFNITFSEYNLEPCEDPGIPQYGSRIGFNFGIGDTLTFSCSSGYRLEGTSEIICLGGGRRVWSAPLPRCVAECGASATNNEGILLSPNYPLNYENNHECIYSIQVQAGKGINISARTFHLAQGDVLKIYDGKDKTTHLLGAFTGASMRGLTLSSTSNQLWLEFNSDTEGTDEGFQLVYTSFELSHCEDPGIPQFGYKISDQGHFAGSTIIYGCNPGYTLHGSSLLKCMTGERRAWDYPLPSCIAECGGRFKGESSGRILSPGYPFPYDNNLRCMWMIEVDPGNIVSLQFLAFDTEASHDILRVWDGPPENDMLLKEISGSLIPEGIHSTLNIVTIQFDTDFYISKSGFAIQFSSSVATACRDPGVPMNGTRNGDGREPGDTVVFQCDPGYELQGEERITCIQVENRYFWQPSPPVCIAPCGGNLTGSSGFILSPNFPHPYPHSRDCDWTITVNADYVISLAFISFSIEPNYDFLYIYDGPDSNSPLIGSFQDSKLPERIESSSNTMHLAFRSDGSVSYTGFHLEYKAKLRESCFDPGNIMNGTRLGMDYKLGSTVTYYCDAGYVLQGYSTLTCIMGDDGRPGWNRALPSCHAPCGSRSTGSEGTVLSPNYPKNYSVGHNCVYSIAVPKEFVVFGQFVFFQTSLHDVVEVYDGPTQQSSLLSSLSGSHSGESLPLSSGNQITIRFTSVGPITAKGFHFVYQAVPRTSSTQCSSVPEPRFGRRIGNEFAVGSSVLFDCNPGYILHGSIAIRCETVPNSLAQWNDSLPTCIVPCGGILTKRKGTILSPGYPEPYDNNLNCVWKITVPEGAGIQVQVVSFATEHNWDSLDFYDGGDNNAPRLGSYSGTTIPHLLNSTSNNLYLNFQSDISVSAAGFHLEYTAIGLDSCPEPQTPSSGIKIGDRYMVGDVVSFQCDQGYSLQGHSHITCMPGPVRRWNYPIPICLAQCGGAMSDFSGVILSPGFPGNYPSSLDCTWTINLPIGFGVHLQFVNFSTETIHDYLEVRSGSSETSTVIGRLSGPQIPSSLFSTTHETSLYFHSDYSQNKQGFHIVYQAYQLQSCPDPRPFRNGFVIGNDFTVGQTISFECFPGYTLIGNSALTCLHGVSRNWNHPLPRCEALCGGNITAMNGTIYSPGYPDEYPNFQDCFWLVRVPPGNGIYINFTVLQTEPIYDFITVWDGPDQNSPQIGQFSGNTALESVYSTSNQILIKFHSDFTTSGFFVLSYHAYQLRVCQPPPPVPNAEILTEDDEFEIGDIIRYQCLPGFTLVGNAILTCRLGERLQMDGAPPVCQVLCPANELRLDSTGVILSPGYPDSYPNLQMCAWSISVEKGYNITMFVEFFQTEKEFDVLQVYDGPNIQSPVLISLSGDYSSAFNITSNGHEVFLQWSADHGNNKKGFRIRYIAFYCSTPESPPHGYIISQTGGQLNSVVRWACDRGFRLVGKSSAVCRKSSYGYHAWDAPVPACQAISCGIPKAPTNGGILTTDYLVGTRVTYFCNDGYRLSSKELTTAVCQSDGTWSNHNKTPRCVVVTCPSINSFILEHGRWRIVNGSHYEYKTKVVFSCDPGYHGLGPASIECLPNGTWSWRNERPYCQIISCGELPTPPNGNKIGTQTSYGSTAIFTCDLGFMLVGSAVRECLSSGLWSESETRCLAGHCGIPELIVNGQVIGENYGYRDTVVYQCNPGFRLIGSSVRICQQDHNWSGQLPSCVPVSCGHPGSPIYGRTSGNGFNFNDVVTFSCNIGYLMQGPTKAQCQANRQWSHPPPMCKVVNCSDPGIPANSKRESKIEHGNFTYGTVVFYDCNPGYFLFGSSVLICQPNGQWDKPLPECIMIDCGHPGVPPNAVLSGEKYTFGSTVHYSCTGKRSLLGQSSRTCQLNGHWSGSQPHCSGDATGTCGDPGTPGHGSRQESNFRTKSTVRYACDTGYILHGSEERTCLANGSWTGRQPECKAVQCGNPGTTANGKVFRIDGTTFSSSVIYSCMEGYILSGPSVRQCTANGTWSGTLPNCTIISCGDPGIPANGLRYGDDYVVGQNVSYMCQPGYTMELNGSRIRTCTINGTWSGVMPTCRAVTCPTPPQISNGRLEGTNFDWGFSISYICSPGYELSFPAVLTCVGNGTWSGEVPQCLPKFCGDPGIPAQGKREGKSFIYQSEVSFSCNFPFILVGSSTRICQADGTWSGSSPHCIEPTQTSCENPGVPRHGSQNNTFGFQVGSVVQFHCKKGHLLQGSTTRTCLPDLTWSGIQPECIPHSCKQPETPAHANVVGMDLPSHGYTLIYTCQPGFFLAGGTEHRVCRSDNTWTGKVPICEAGSKILVKDPRPALGTPSPKLSVPDDVFAQNYIWKGSYNFKGRKQPMTLTVTSFNASTGRVNATLSNSNMELLLSGVYKSQEARLMLRIYLIKVPAHASVKKMKEENWAMDGFVSAEPDGATYVFQGFIQGKDYGQFGLQRLGLNMSEGSNSSNQPHGTNSSSVAIAILVPFFALIFAGFGFYLYKQRTAPKTQYTGCSVHENNNGQAAFENPMYDTNAKSVEGKAVRFDPNLNTVCTMV.

The interval 1–21 (MKGIRKGESRAKESKPWEPGK) is disordered. Residues 1–42 (MKGIRKGESRAKESKPWEPGKRRCAKCGRLDFILMKKMGIKS) are Cytoplasmic-facing. A helical membrane pass occupies residues 43–63 (GFTFWNLVFLLTVSCVKGFIY). Topologically, residues 64 to 3630 (TCGGTLKGLN…NQPHGTNSSS (3567 aa)) are extracellular. Disulfide bonds link cysteine 65-cysteine 91, cysteine 178-cysteine 218, cysteine 204-cysteine 235, and cysteine 241-cysteine 267. The CUB 1 domain maps to 65–173 (CGGTLKGLNG…HGFKVYYEEL (109 aa)). N-linked (GlcNAc...) asparagine glycans are attached at residues asparagine 73 and asparagine 90. Residues 176–237 (SSCGNPGVPP…WDFPVPICRA (62 aa)) form the Sushi 1 domain. Residues 241 to 345 (CGGTMRGSSG…RGFSAPYQGS (105 aa)) form the CUB 2 domain. N-linked (GlcNAc...) asparagine glycans are attached at residues asparagine 361 and asparagine 409. The tract at residues 394-435 (QRVQVTSLRNSGLDPNTSKDGLSPHPADTQSTRRRPRHAEQI) is disordered. Polar residues predominate over residues 396 to 413 (VQVTSLRNSGLDPNTSKD). The Sushi 2 domain maps to 484 to 545 (NLCPDPGEPE…WSDHRPVCKV (62 aa)). Disulfide bonds link cysteine 486/cysteine 526, cysteine 512/cysteine 543, cysteine 548/cysteine 574, cysteine 664/cysteine 704, cysteine 690/cysteine 717, and cysteine 721/cysteine 747. The CUB 3 domain maps to 548–659 (CGSNLQGPSG…VGFKVNYKEI (112 aa)). Positions 662 to 719 (ESCGDPGTPLYGIREGDGFSNRDVLRFECQFGFELIGEKSIVCQENNQWSANIPICIF) constitute a Sushi 3 domain. Positions 721-829 (CLSNFTAPMG…RGFNITYNTF (109 aa)) constitute a CUB 4 domain. N-linked (GlcNAc...) asparagine glycosylation is found at asparagine 724 and asparagine 823. Residues 832–893 (NECPDPGIPI…WSGLIPKCGA (62 aa)) enclose the Sushi 4 domain. 3 disulfides stabilise this stretch: cysteine 834-cysteine 875, cysteine 860-cysteine 891, and cysteine 895-cysteine 921. Residues 895-1003 (CGGHFSAPSG…NGFKIHYESV (109 aa)) enclose the CUB 5 domain. Asparagine 966 is a glycosylation site (N-linked (GlcNAc...) asparagine). The 58-residue stretch at 1008 to 1065 (YSCLDPGIPVHGRRYGHDFSIGSTVSFSCDSGYRLSHEEPLLCEKNHWWSHPLPTCDA) folds into the Sushi 5 domain. 3 cysteine pairs are disulfide-bonded: cysteine 1010–cysteine 1050, cysteine 1036–cysteine 1063, and cysteine 1067–cysteine 1093. A CUB 6 domain is found at 1067 to 1177 (CGGDVRGPSG…EGFNITFSEY (111 aa)). N-linked (GlcNAc...) asparagine glycosylation is found at asparagine 1092, asparagine 1126, and asparagine 1171. The 60-residue stretch at 1180 to 1239 (EPCEDPGIPQYGSRIGFNFGIGDTLTFSCSSGYRLEGTSEIICLGGGRRVWSAPLPRCVA) folds into the Sushi 6 domain. Intrachain disulfides connect cysteine 1182/cysteine 1222, cysteine 1208/cysteine 1237, and cysteine 1241/cysteine 1267. Residues 1241-1349 (CGASATNNEG…EGFQLVYTSF (109 aa)) form the CUB 7 domain. N-linked (GlcNAc...) asparagine glycosylation is present at asparagine 1280. The Sushi 7 domain maps to 1352-1412 (SHCEDPGIPQ…WDYPLPSCIA (61 aa)). 12 cysteine pairs are disulfide-bonded: cysteine 1354–cysteine 1395, cysteine 1381–cysteine 1410, cysteine 1414–cysteine 1441, cysteine 1528–cysteine 1568, cysteine 1554–cysteine 1584, cysteine 1588–cysteine 1614, cysteine 1701–cysteine 1741, cysteine 1727–cysteine 1758, cysteine 1762–cysteine 1788, cysteine 1878–cysteine 1918, cysteine 1904–cysteine 1935, and cysteine 1939–cysteine 1965. The region spanning 1414-1523 (CGGRFKGESS…SGFAIQFSSS (110 aa)) is the CUB 8 domain. The Sushi 8 domain occupies 1526–1586 (TACRDPGVPM…WQPSPPVCIA (61 aa)). N-linked (GlcNAc...) asparagine glycosylation is present at asparagine 1536. Positions 1588–1696 (CGGNLTGSSG…TGFHLEYKAK (109 aa)) constitute a CUB 9 domain. 2 N-linked (GlcNAc...) asparagine glycosylation sites follow: asparagine 1591 and asparagine 1709. The region spanning 1699–1760 (ESCFDPGNIM…WNRALPSCHA (62 aa)) is the Sushi 9 domain. The CUB 10 domain maps to 1762–1870 (CGSRSTGSEG…KGFHFVYQAV (109 aa)). An N-linked (GlcNAc...) asparagine glycan is attached at asparagine 1781. The Sushi 10 domain occupies 1876–1937 (TQCSSVPEPR…WNDSLPTCIV (62 aa)). Residue asparagine 1929 is glycosylated (N-linked (GlcNAc...) asparagine). Residues 1939–2047 (CGGILTKRKG…AGFHLEYTAI (109 aa)) form the CUB 11 domain. N-linked (GlcNAc...) asparagine glycosylation occurs at asparagine 2019. Residues 2050–2109 (DSCPEPQTPSSGIKIGDRYMVGDVVSFQCDQGYSLQGHSHITCMPGPVRRWNYPIPICLA) enclose the Sushi 11 domain. Cystine bridges form between cysteine 2052–cysteine 2092, cysteine 2078–cysteine 2107, and cysteine 2111–cysteine 2137. Positions 2111–2219 (CGGAMSDFSG…QGFHIVYQAY (109 aa)) constitute a CUB 12 domain. Residue asparagine 2155 is glycosylated (N-linked (GlcNAc...) asparagine). One can recognise a Sushi 12 domain in the interval 2222–2281 (QSCPDPRPFRNGFVIGNDFTVGQTISFECFPGYTLIGNSALTCLHGVSRNWNHPLPRCEA). Disulfide bonds link cysteine 2224-cysteine 2264, cysteine 2250-cysteine 2279, and cysteine 2283-cysteine 2309. A CUB 13 domain is found at 2283–2394 (CGGNITAMNG…LSYHAYQLRV (112 aa)). Residues asparagine 2286, asparagine 2291, and asparagine 2324 are each glycosylated (N-linked (GlcNAc...) asparagine). The region spanning 2393-2454 (RVCQPPPPVP…MDGAPPVCQV (62 aa)) is the Sushi 13 domain. 3 disulfide bridges follow: cysteine 2395–cysteine 2437, cysteine 2423–cysteine 2452, and cysteine 2456–cysteine 2484. The CUB 14 domain maps to 2456–2567 (CPANELRLDS…KGFRIRYIAF (112 aa)). Asparagine 2495 and asparagine 2537 each carry an N-linked (GlcNAc...) asparagine glycan. Sushi domains are found at residues 2567–2629 (FYCS…ACQA), 2630–2691 (ISCG…RCVV), 2692–2756 (VTCP…YCQI), 2757–2814 (ISCG…RCLA), 2815–2872 (GHCG…SCVP), 2873–2930 (VSCG…MCKV), 2931–2992 (VNCS…ECIM), 2993–3050 (IDCG…HCSG), 3054–3111 (GTCG…ECKA), 3112–3170 (VQCG…NCTI), 3171–3230 (ISCG…TCRA), 3231–3288 (VTCP…QCLP), 3289–3346 (KFCG…HCIE), 3350–3408 (TSCE…ECIP), and 3409–3468 (HSCK…ICEA). 12 disulfide bridges follow: cysteine 2569/cysteine 2610, cysteine 2596/cysteine 2627, cysteine 2632/cysteine 2674, cysteine 2658/cysteine 2689, cysteine 2694/cysteine 2739, cysteine 2725/cysteine 2754, cysteine 2759/cysteine 2799, cysteine 2785/cysteine 2812, cysteine 2817/cysteine 2857, cysteine 2843/cysteine 2870, cysteine 2875/cysteine 2915, and cysteine 2901/cysteine 2928. N-linked (GlcNAc...) asparagine glycosylation is found at asparagine 2711 and asparagine 2742. Residue asparagine 2862 is glycosylated (N-linked (GlcNAc...) asparagine). Asparagine 2932 and asparagine 2952 each carry an N-linked (GlcNAc...) asparagine glycan. Cystine bridges form between cysteine 2933/cysteine 2977, cysteine 2963/cysteine 2990, cysteine 2995/cysteine 3035, cysteine 3021/cysteine 3048, cysteine 3056/cysteine 3096, cysteine 3082/cysteine 3109, cysteine 3114/cysteine 3155, cysteine 3141/cysteine 3168, cysteine 3173/cysteine 3215, cysteine 3199/cysteine 3228, cysteine 3233/cysteine 3273, cysteine 3259/cysteine 3286, cysteine 3291/cysteine 3331, cysteine 3317/cysteine 3344, cysteine 3352/cysteine 3393, cysteine 3379/cysteine 3406, cysteine 3411/cysteine 3453, and cysteine 3438/cysteine 3466. Asparagine 3099 carries N-linked (GlcNAc...) asparagine glycosylation. 5 N-linked (GlcNAc...) asparagine glycosylation sites follow: asparagine 3158, asparagine 3167, asparagine 3194, asparagine 3208, and asparagine 3218. Residue asparagine 3276 is glycosylated (N-linked (GlcNAc...) asparagine). The N-linked (GlcNAc...) asparagine glycan is linked to asparagine 3364. 5 N-linked (GlcNAc...) asparagine glycosylation sites follow: asparagine 3522, asparagine 3529, asparagine 3612, asparagine 3618, and asparagine 3627. A helical membrane pass occupies residues 3631 to 3651 (VAIAILVPFFALIFAGFGFYL). The Cytoplasmic portion of the chain corresponds to 3652–3707 (YKQRTAPKTQYTGCSVHENNNGQAAFENPMYDTNAKSVEGKAVRFDPNLNTVCTMV).

It belongs to the CSMD family. In terms of tissue distribution, weakly expressed in most tissues, except in brain. Expressed at intermediate level in brain, including cerebellum, substantia nigra, thalamus, spinal cord, hippocampus and fetal brain. Also expressed in testis.

It localises to the cell membrane. Functionally, involved in dendrite development. The chain is CUB and sushi domain-containing protein 3 (CSMD3) from Homo sapiens (Human).